Reading from the N-terminus, the 372-residue chain is 4-hydroxy-3-methylbut-2-en-1-yl diphosphate synthase (flavodoxin) (372 aa).

[4Fe-4S] cluster-binding residues include Cys-270, Cys-273, Cys-305, and Glu-312.

The protein belongs to the IspG family. It depends on [4Fe-4S] cluster as a cofactor.

It catalyses the reaction (2E)-4-hydroxy-3-methylbut-2-enyl diphosphate + oxidized [flavodoxin] + H2O + 2 H(+) = 2-C-methyl-D-erythritol 2,4-cyclic diphosphate + reduced [flavodoxin]. It participates in isoprenoid biosynthesis; isopentenyl diphosphate biosynthesis via DXP pathway; isopentenyl diphosphate from 1-deoxy-D-xylulose 5-phosphate: step 5/6. Converts 2C-methyl-D-erythritol 2,4-cyclodiphosphate (ME-2,4cPP) into 1-hydroxy-2-methyl-2-(E)-butenyl 4-diphosphate. The polypeptide is 4-hydroxy-3-methylbut-2-en-1-yl diphosphate synthase (flavodoxin) (Salmonella choleraesuis (strain SC-B67)).